A 142-amino-acid polypeptide reads, in one-letter code: U1 small nuclear ribonucleoprotein C (142 aa).

Residues 4 to 36 (YYCDYCDTFLTHDSPSVRKTHNGGRKHKDNVRM) form a Matrin-type zinc finger.

Belongs to the U1 small nuclear ribonucleoprotein C family. In terms of assembly, U1 snRNP is composed of the 7 core Sm proteins B/B', D1, D2, D3, E, F and G that assemble in a heptameric protein ring on the Sm site of the small nuclear RNA to form the core snRNP, and at least 3 U1 snRNP-specific proteins U1-70K, U1-A and U1-C. U1-C interacts with U1 snRNA and the 5' splice-site region of the pre-mRNA.

The protein resides in the nucleus. Its function is as follows. Component of the spliceosomal U1 snRNP, which is essential for recognition of the pre-mRNA 5' splice-site and the subsequent assembly of the spliceosome. U1-C is directly involved in initial 5' splice-site recognition for both constitutive and regulated alternative splicing. The interaction with the 5' splice-site seems to precede base-pairing between the pre-mRNA and the U1 snRNA. Stimulates commitment or early (E) complex formation by stabilizing the base pairing of the 5' end of the U1 snRNA and the 5' splice-site region. This is U1 small nuclear ribonucleoprotein C from Caenorhabditis briggsae.